The chain runs to 543 residues: CBS domain-containing protein CBSCBSPB1 (543 aa).

The disordered stretch occupies residues 1 to 35 (MASQGGPRRSLSVTTASLHGKKKSMDMAERGLDTG). Phosphoserine is present on Ser17. The span at 23–35 (KSMDMAERGLDTG) shows a compositional bias: basic and acidic residues. CBS domains follow at residues 59-118 (RLSK…NVEE), 125-183 (MTKN…RAAE), 225-285 (IIPD…LPPS), and 293-350 (MTQN…AGTT). The interval 372–393 (LSPNEDDEDSRSESSMKVASEA) is disordered. The PB1 domain occupies 402 to 489 (ANTFSFKIED…KSLRLHLDDS (88 aa)). The helical transmembrane segment at 518–538 (AYSGVAAGAALVAGLGFMAFL) threads the bilayer.

It is found in the membrane. The polypeptide is CBS domain-containing protein CBSCBSPB1 (CBSCBSPB1) (Arabidopsis thaliana (Mouse-ear cress)).